Consider the following 340-residue polypeptide: Ribonucleoside-diphosphate reductase small subunit (340 aa).

The Fe cation site is built by D94, E124, and H127. The active site involves Y131. The chain crosses the membrane as a helical span at residues 180–200; the sequence is FILMILIEGIFFAASFAAIAY. Fe cation-binding residues include E187, E221, and H224.

Belongs to the ribonucleoside diphosphate reductase small chain family. In terms of assembly, heterotetramer composed of a homodimer of the large subunit (R1) and a homodimer of the small subunit (R2). Larger multisubunit protein complex are also active, composed of (R1)n(R2)n. The cofactor is Fe cation.

It localises to the host membrane. It carries out the reaction a 2'-deoxyribonucleoside 5'-diphosphate + [thioredoxin]-disulfide + H2O = a ribonucleoside 5'-diphosphate + [thioredoxin]-dithiol. Its function is as follows. Ribonucleoside-diphosphate reductase holoenzyme provides the precursors necessary for viral DNA synthesis. Allows virus growth in non-dividing cells, as well as reactivation from latency in infected hosts. Catalyzes the biosynthesis of deoxyribonucleotides from the corresponding ribonucleotides. This Human herpesvirus 1 (strain KOS) (HHV-1) protein is Ribonucleoside-diphosphate reductase small subunit.